A 288-amino-acid chain; its full sequence is Probable ketoamine kinase VP1481 (288 aa).

Residue 92-94 (NYL) coordinates ATP. The Proton acceptor role is filled by Asp195.

The protein belongs to the fructosamine kinase family.

Functionally, ketoamine kinase that phosphorylates ketoamines on the third carbon of the sugar moiety to generate ketoamine 3-phosphate. The sequence is that of Probable ketoamine kinase VP1481 from Vibrio parahaemolyticus serotype O3:K6 (strain RIMD 2210633).